The sequence spans 79 residues: Small ribosomal subunit protein uS17 (79 aa).

This sequence belongs to the universal ribosomal protein uS17 family. Part of the 30S ribosomal subunit.

In terms of biological role, one of the primary rRNA binding proteins, it binds specifically to the 5'-end of 16S ribosomal RNA. This is Small ribosomal subunit protein uS17 from Bartonella quintana (strain Toulouse) (Rochalimaea quintana).